Reading from the N-terminus, the 295-residue chain is Nitrogenase iron protein 1 (295 aa).

Residue 12-19 coordinates ATP; that stretch reads GKGGIGKS. Cysteine 100 is a [4Fe-4S] cluster binding site. An ADP-ribosylarginine; by dinitrogenase reductase ADP-ribosyltransferase modification is found at arginine 103. Cysteine 134 is a binding site for [4Fe-4S] cluster.

Belongs to the NifH/BchL/ChlL family. Homodimer. [4Fe-4S] cluster is required as a cofactor. The reversible ADP-ribosylation of Arg-103 inactivates the nitrogenase reductase and regulates nitrogenase activity.

The catalysed reaction is N2 + 8 reduced [2Fe-2S]-[ferredoxin] + 16 ATP + 16 H2O = H2 + 8 oxidized [2Fe-2S]-[ferredoxin] + 2 NH4(+) + 16 ADP + 16 phosphate + 6 H(+). Its function is as follows. The key enzymatic reactions in nitrogen fixation are catalyzed by the nitrogenase complex, which has 2 components: the iron protein and the molybdenum-iron protein. The chain is Nitrogenase iron protein 1 (nifH1) from Mastigocladus laminosus (Fischerella sp.).